The following is a 670-amino-acid chain: MNAPERIDPAARCANALRFLAADAVELARSGHPGAPMGMAEMAEVVWRRHLRHNPANPAWPDRDRFVLSNGHASMLQYALLHLTGYDLPMSQLRQFRQLHAVTPGHPEVDVTPGVETTTGPLGQGLANAVGMALAEKLLAATFNRPGFDIVDHHTYVFLGDGCLMEGLSHEACSLAGTLGLGKLICLYDDNGISIDGEVAGWFADDTPKRFAAYGWHVIADVDGHDAHALDAALHEAKAERDRPTLICCRTVIGKGAPAKAGGHDVHGAPLGAPEIAAMRTALGWEAEPFTVPADVADAWDARAQGAAREAEWEARFVSYCAAHPELAEEFVRRANGRLPEGFDAELMALLDAPSPLQGKIATRKASQLCLEALTPALPELLGGSADLTGSNLTNVKASVWVNHAGHGNYVSYGVREFGMAAVMNGIALHGGLIPYGGTFMTFSDYSRNAIRMAALMRLRVVHVLTHDSIGLGEDGPTHQPVEHAASLRLIPNNQVWRPCDGAETAYAWLAALQRENGPTCLVLSRQALMPFERDAAQRADIARGGYVLRDVPAPRVVLIATGSEVEIAARAALDLADAGIAARVVSMPCVELFYAQDAAYRDSVLPPGLPRISVEAGATWYWRGVVGEQGLALGIDSFGESAPAEALYQHFGLTPAHVAAAARVLLEDA.

His-32 is a substrate binding site. Thiamine diphosphate contacts are provided by residues His-72 and Gly-120–Leu-122. Asp-161 contacts Mg(2+). 2 residues coordinate thiamine diphosphate: Gly-162 and Asn-191. 2 residues coordinate Mg(2+): Asn-191 and Ile-193. Substrate contacts are provided by His-267, Arg-364, and Ser-391. A thiamine diphosphate-binding site is contributed by His-267. Glu-417 acts as the Proton donor in catalysis. Thiamine diphosphate is bound at residue Phe-443. The substrate site is built by His-467, Asp-475, and Arg-526.

Belongs to the transketolase family. As to quaternary structure, homodimer. The cofactor is Mg(2+). Requires Ca(2+) as cofactor. It depends on Mn(2+) as a cofactor. Co(2+) serves as cofactor. Thiamine diphosphate is required as a cofactor.

The catalysed reaction is D-sedoheptulose 7-phosphate + D-glyceraldehyde 3-phosphate = aldehydo-D-ribose 5-phosphate + D-xylulose 5-phosphate. Its pathway is carbohydrate biosynthesis; Calvin cycle. Its function is as follows. Catalyzes the transfer of a two-carbon ketol group from a ketose donor to an aldose acceptor, via a covalent intermediate with the cofactor thiamine pyrophosphate. This is Transketolase, plasmid (cbbTP) from Cupriavidus necator (strain ATCC 17699 / DSM 428 / KCTC 22496 / NCIMB 10442 / H16 / Stanier 337) (Ralstonia eutropha).